The following is a 463-amino-acid chain: MLPVVALIGRTNVGKSTLFNYLTRTRDALVADFPGLTRDRQYGRVQRGERDYFVVDTGGIIEAAEGIDDQAMKQVDHVLDEADVILFLVDVHAGMTAGDELIADRLRRINKPVLLVANKIDGTQALIAGAEFHAFGLGEPLLISAAHGTGVHALLERVEALLPESGETGETEAEGGIRIAVVGRPNVGKSTLVNRILGEERVVVYDQPGTTRDSIYIPFERRGERYTLIDTAGIRRRARVNEGVEKFSVIKSFQAIEKAHVVIYLVDASEGLTDQDANLLGMVLEIGRGLLIGFNKWDGLEPEQREKVKRQIDVKLPFLEFAKKYFISALHGTGVGVLMDAVKPIYQSAMLDLSASRLTQVLQDCLTAHPPPLVRGRRIKLKYAHQGGHNPPVVVIHGNQTEDLPAAYRRYLGNEFRNAFKLQGVPLKLVFKSAENPFQGRRNELTERQIRKRRRMIRHVKKR.

EngA-type G domains are found at residues 3–166 (PVVA…PESG) and 177–350 (IRIA…QSAM). Residues 9-16 (GRTNVGKS), 56-60 (DTGGI), 118-121 (NKID), 183-190 (GRPNVGKS), 230-234 (DTAGI), and 295-298 (NKWD) each bind GTP. In terms of domain architecture, KH-like spans 351–435 (LDLSASRLTQ…PLKLVFKSAE (85 aa)).

The protein belongs to the TRAFAC class TrmE-Era-EngA-EngB-Septin-like GTPase superfamily. EngA (Der) GTPase family. In terms of assembly, associates with the 50S ribosomal subunit.

GTPase that plays an essential role in the late steps of ribosome biogenesis. This Methylococcus capsulatus (strain ATCC 33009 / NCIMB 11132 / Bath) protein is GTPase Der.